Here is a 981-residue protein sequence, read N- to C-terminus: Mediator of RNA polymerase II transcription subunit 5 (981 aa).

The protein belongs to the Mediator complex subunit 5 family. In terms of assembly, component of the Mediator complex.

Its subcellular location is the nucleus. Its function is as follows. Component of the Mediator complex, a coactivator involved in the regulated transcription of nearly all RNA polymerase II-dependent genes. Mediator functions as a bridge to convey information from gene-specific regulatory proteins to the basal RNA polymerase II transcription machinery. Mediator is recruited to promoters by direct interactions with regulatory proteins and serves as a scaffold for the assembly of a functional preinitiation complex with RNA polymerase II and the general transcription factors. This is Mediator of RNA polymerase II transcription subunit 5 (NUT1) from Scheffersomyces stipitis (strain ATCC 58785 / CBS 6054 / NBRC 10063 / NRRL Y-11545) (Yeast).